Here is a 465-residue protein sequence, read N- to C-terminus: GTPase Der (465 aa).

EngA-type G domains follow at residues 3-167 and 179-352; these read PLVA…PEEG and VRIA…ASAT. GTP contacts are provided by residues 9–16, 57–61, 119–122, 185–192, 232–236, and 297–300; these read GRPNVGKS, DTGGI, NKID, DTAGL, and NKWD. Residues 353–437 enclose the KH-like domain; that stretch reads HEFSTSEVNQ…PVRFIFREGA (85 aa).

It belongs to the TRAFAC class TrmE-Era-EngA-EngB-Septin-like GTPase superfamily. EngA (Der) GTPase family. Associates with the 50S ribosomal subunit.

Functionally, GTPase that plays an essential role in the late steps of ribosome biogenesis. The polypeptide is GTPase Der (Xanthomonas campestris pv. campestris (strain 8004)).